Reading from the N-terminus, the 310-residue chain is AMMECR1-like protein (310 aa).

Positions 26–92 (LSGSGTHSHG…SGALSPLPRP (67 aa)) are disordered. 2 stretches are compositionally biased toward polar residues: residues 28–66 (GSGT…NVSD) and 74–84 (SPITRMNTASG). At serine 74 the chain carries Phosphoserine. Positions 97–291 (NSTKNLVVTA…ISYAEYIASR (195 aa)) constitute an AMMECR1 domain.

The polypeptide is AMMECR1-like protein (Ammecr1l) (Mus musculus (Mouse)).